The following is a 536-amino-acid chain: Probable monofunctional riboflavin biosynthesis protein RIBA 3, chloroplastic (536 aa).

Residues 1–43 (MDRVLLSSQLSSQTVVNTRVQQGSGGINSIGFAVIRKGSLKLR) constitute a chloroplast transit peptide. Residues 44–310 (CYAIGGLGGG…IADLIRYRRK (267 aa)) form an inactive DHBP synthase region. D-ribulose 5-phosphate is bound by residues 133–134 (GD), Asp-138, and 248–252 (RAGHT). Positions 311–536 (REKLVELIAV…GDQDEDDTHN (226 aa)) are GTP cyclohydrolase II. 361–365 (RVHSE) contributes to the GTP binding site. Zn(2+) is bound by residues Cys-366, Cys-377, and Cys-379. GTP contacts are provided by residues Gln-382, 405–407 (EGR), and Thr-427. Asp-439 serves as the catalytic Proton acceptor; for GTP cyclohydrolase activity. The active-site Nucleophile; for GTP cyclohydrolase activity is the Arg-441. Residues Thr-462 and Lys-467 each contribute to the GTP site. Positions 507–536 (YGSDLPGNVPEEFLNPDDIAGDQDEDDTHN) are disordered. The span at 525-536 (IAGDQDEDDTHN) shows a compositional bias: acidic residues.

This sequence in the N-terminal section; belongs to the DHBP synthase family. It in the C-terminal section; belongs to the GTP cyclohydrolase II family. Requires Zn(2+) as cofactor.

It localises to the plastid. It is found in the chloroplast. It carries out the reaction GTP + 4 H2O = 2,5-diamino-6-hydroxy-4-(5-phosphoribosylamino)-pyrimidine + formate + 2 phosphate + 3 H(+). The protein operates within cofactor biosynthesis; riboflavin biosynthesis; 5-amino-6-(D-ribitylamino)uracil from GTP: step 1/4. In terms of biological role, involved in riboflavin biosynthesis. Catalyzes the conversion of GTP to 2,5-diamino-6-ribosylamino-4(3H)-pyrimidinone 5'-phosphate (DARP), formate and pyrophosphate. This Oryza sativa subsp. japonica (Rice) protein is Probable monofunctional riboflavin biosynthesis protein RIBA 3, chloroplastic (RIBA3).